A 303-amino-acid polypeptide reads, in one-letter code: HTH-type transcriptional regulator YjiE (303 aa).

The 58-residue stretch at 11-68 folds into the HTH lysR-type domain; sequence IETKWLYDFLTLEKCRNFSQAAVSRNVSQPAFSRRIRALEQAIGVELFNRQVTPLQLS. Positions 28-47 form a DNA-binding region, H-T-H motif; sequence FSQAAVSRNVSQPAFSRRIR.

It belongs to the LysR transcriptional regulatory family. In terms of assembly, forms dimers, tetramers and possibly dodecameric complexes; oligomerization may be governed by cellular concentrations. DNA-binding seems to decrease oligomerization.

In terms of biological role, protects cells from HOCl (hypochlorite) stress but not peroxide or diamide stress. Decreases the intracellular load of reactive oxygen species by up-regulating genes involved in methionine and cysteine biosynthesis and down-regulating Fur-regulated genes involved in iron acquisition. Has also been suggested to down-regulate expression of the flagellar regulon, decreasing motility, but this activity was not confirmed in a second study. This is HTH-type transcriptional regulator YjiE (yjiE) from Escherichia coli (strain K12).